The primary structure comprises 389 residues: Large envelope protein (389 aa).

M1 is subject to N-acetylmethionine. G2 carries the N-myristoyl glycine; by host lipid modification. Residues G2–A108 are pre-S1. The interval G2 to N163 is pre-S. At G2–G170 the chain is on the virion surface; in external conformation side. The Intravirion; in internal conformation segment spans residues G2–R242. Positions L74–D103 are disordered. A compositionally biased stretch (polar residues) spans S85–T95. A pre-S2 region spans residues M109–N163. Residues L171 to I191 form a helical membrane-spanning segment. At P192–R242 the chain is on the intravirion; in external conformation side. Residues F243–Y263 form a helical membrane-spanning segment. Topologically, residues Q264–S337 are virion surface. N309 carries an N-linked (GlcNAc...) asparagine; by host glycan. A helical transmembrane segment spans residues L338–I358. The Intravirion portion of the chain corresponds to W359–W364. Residues G365–V387 form a helical membrane-spanning segment. Residues Y388–I389 lie on the Virion surface side of the membrane.

Belongs to the orthohepadnavirus major surface antigen family. Interacts (via its myristoylated pre-S1 region) with the host SLC10A1/NTCP; this interaction is essential for viral entry. In terms of assembly, in its internal form (Li-HBsAg), interacts with the capsid protein and with the isoform S. Interacts with host chaperone CANX. As to quaternary structure, associates with host chaperone CANX through its pre-S2 N glycan; this association may be essential for isoform M proper secretion. Interacts with isoform L. Interacts with the antigens of satellite virus HDV (HDVAgs); this interaction is required for encapsidation of HDV genomic RNA. Isoform M is N-terminally acetylated by host at a ratio of 90%, and N-glycosylated by host at the pre-S2 region. Post-translationally, myristoylated; this modification is essential for its interaction with the host protein SLC10A1/NTCP.

It is found in the virion membrane. The large envelope protein exists in two topological conformations, one which is termed 'external' or Le-HBsAg and the other 'internal' or Li-HBsAg. In its external conformation the protein attaches the virus to cell receptors and thereby initiating infection. This interaction determines the species specificity and liver tropism. This attachment induces virion internalization predominantly through caveolin-mediated endocytosis. The large envelope protein also assures fusion between virion membrane and endosomal membrane. In its internal conformation the protein plays a role in virion morphogenesis and mediates the contact with the nucleocapsid like a matrix protein. Functionally, the middle envelope protein plays an important role in the budding of the virion. It is involved in the induction of budding in a nucleocapsid independent way. In this process the majority of envelope proteins bud to form subviral lipoprotein particles of 22 nm of diameter that do not contain a nucleocapsid. This is Large envelope protein from Hepatitis B virus genotype B/C subtype adw (isolate Okinawa/pODW282/1998) (HBV-B).